The following is a 644-amino-acid chain: Biosynthetic arginine decarboxylase (644 aa).

Position 105 is an N6-(pyridoxal phosphate)lysine (Lys-105). A substrate-binding site is contributed by 287–297 (LDVGGGLGIDY).

This sequence belongs to the Orn/Lys/Arg decarboxylase class-II family. SpeA subfamily. Mg(2+) is required as a cofactor. The cofactor is pyridoxal 5'-phosphate.

It catalyses the reaction L-arginine + H(+) = agmatine + CO2. Its function is as follows. Catalyzes the biosynthesis of agmatine from arginine. This chain is Biosynthetic arginine decarboxylase, found in Parasynechococcus marenigrum (strain WH8102).